Reading from the N-terminus, the 197-residue chain is SERTA domain-containing protein 3 (197 aa).

Residues 1–23 (MGGLKRKHSDLEEEEEEEKWDWS) are disordered. Residues 27 to 74 (LRSYQQALLRISLDKVQRSLGPRAPSLRRHVLIHNTLQQLQAAIRLAP) form the SERTA domain.

In terms of assembly, interacts with RPA2.

It is found in the nucleus. Its subcellular location is the nucleolus. Antiviral interferon-stimulated protein that plays a role in innate immunity and in the suppression of viruses through different mechanisms. Plays a role in the late phase response of TLR-induced immune effector expression. Strong transcriptional coactivator. This Mus musculus (Mouse) protein is SERTA domain-containing protein 3 (Sertad3).